Reading from the N-terminus, the 506-residue chain is 2,3-bisphosphoglycerate-independent phosphoglycerate mutase (506 aa).

2 residues coordinate Mn(2+): Asp13 and Ser63. The active-site Phosphoserine intermediate is the Ser63. Residues His124, 153–154 (RD), Arg183, Arg189, 254–257 (RADR), and Lys330 each bind substrate. Residues Asp396, His400, Asp437, His438, and His456 each coordinate Mn(2+).

Belongs to the BPG-independent phosphoglycerate mutase family. Monomer. It depends on Mn(2+) as a cofactor.

It catalyses the reaction (2R)-2-phosphoglycerate = (2R)-3-phosphoglycerate. It functions in the pathway carbohydrate degradation; glycolysis; pyruvate from D-glyceraldehyde 3-phosphate: step 3/5. Catalyzes the interconversion of 2-phosphoglycerate and 3-phosphoglycerate. This is 2,3-bisphosphoglycerate-independent phosphoglycerate mutase from Cereibacter sphaeroides (strain KD131 / KCTC 12085) (Rhodobacter sphaeroides).